The primary structure comprises 453 residues: uncharacterized protein (453 aa).

Residues 1–23 (MFLLQRFFIYGLFLACFYTTVFG) form the signal peptide. Over 24–137 (EKHFEAEEYR…EKQFSYSSGT (114 aa)) the chain is Lumenal. Residues 138–158 (NGILATFLTAIPPNIFILLVP) form a helical membrane-spanning segment. The Cytoplasmic segment spans residues 159 to 165 (KSFDTSM). The chain crosses the membrane as a helical span at residues 166 to 186 (LNLFVAVSAGSLLGDVFLQLL). At 187–194 (PTVYSTNG) the chain is on the lumenal side. The chain crosses the membrane as a helical span at residues 195–215 (GDFPASSVYSILIGALVFFLM). Residues 216-358 (DKGIRILIHE…LRNGYTKSQV (143 aa)) lie on the Cytoplasmic side of the membrane. Basic and acidic residues predominate over residues 229–238 (SLSKPKKDGE). Residues 229 to 278 (SLSKPKKDGEETSSVNKPSASSTQTDVKGVEGLRKRNVKDDQNSKGHEPD) are disordered. The segment covering 240-254 (TSSVNKPSASSTQTD) has biased composition (polar residues). A compositionally biased stretch (basic and acidic residues) spans 256–278 (KGVEGLRKRNVKDDQNSKGHEPD). A helical membrane pass occupies residues 359-379 (LVLQMITMVTGLLGAIVATYI). At 380–399 (YTASSSSSPYGSFLLQLEDK) the chain is on the lumenal side. Residues 400-420 (LLPFTAGGFLYIAYLGVFPEL) form a helical membrane-spanning segment. Residues 421 to 432 (LEINLSKGKLGN) lie on the Cytoplasmic side of the membrane. The chain crosses the membrane as a helical span at residues 433-453 (MIYTALYMMFIVGGFSFLYYV).

Belongs to the ZIP transporter (TC 2.A.5) family. KE4/Catsup subfamily.

It is found in the endoplasmic reticulum membrane. This is an uncharacterized protein from Schizosaccharomyces pombe (strain 972 / ATCC 24843) (Fission yeast).